A 383-amino-acid polypeptide reads, in one-letter code: Lipid-A-disaccharide synthase (383 aa).

It belongs to the LpxB family.

The catalysed reaction is 2-N,3-O-bis[(3R)-3-hydroxytetradecanoyl]-alpha-D-glucosaminyl 1-phosphate + UDP-2-N,3-O-bis[(3R)-3-hydroxytetradecanoyl]-alpha-D-glucosamine = lipid A disaccharide (E. coli) + UDP + H(+). It catalyses the reaction a lipid X + a UDP-2-N,3-O-bis[(3R)-3-hydroxyacyl]-alpha-D-glucosamine = a lipid A disaccharide + UDP + H(+). It participates in glycolipid biosynthesis; lipid IV(A) biosynthesis; lipid IV(A) from (3R)-3-hydroxytetradecanoyl-[acyl-carrier-protein] and UDP-N-acetyl-alpha-D-glucosamine: step 5/6. In terms of biological role, condensation of UDP-2,3-diacylglucosamine and 2,3-diacylglucosamine-1-phosphate to form lipid A disaccharide, a precursor of lipid A, a phosphorylated glycolipid that anchors the lipopolysaccharide to the outer membrane of the cell. This is Lipid-A-disaccharide synthase from Klebsiella pneumoniae subsp. pneumoniae (strain ATCC 700721 / MGH 78578).